The primary structure comprises 204 residues: ADP-ribosylation factor-like protein 15 (204 aa).

GTP is bound by residues 39-46 (GLTGSGKT), 82-86 (ELGGA), and 142-145 (NHQD).

It belongs to the small GTPase superfamily. Arf family.

This chain is ADP-ribosylation factor-like protein 15 (ARL15), found in Pongo abelii (Sumatran orangutan).